Reading from the N-terminus, the 63-residue chain is Large ribosomal subunit protein uL30 (63 aa).

It belongs to the universal ribosomal protein uL30 family. Part of the 50S ribosomal subunit.

This chain is Large ribosomal subunit protein uL30, found in Bradyrhizobium sp. (strain ORS 278).